We begin with the raw amino-acid sequence, 561 residues long: Acyl-CoA ligase frbB (561 aa).

Residues 213-221 (TSGTSGAQK), 354-359 (PGWGLT), aspartate 437, arginine 456, and lysine 551 each bind ATP. The SBD1 stretch occupies residues 284–354 (DLKRVLGSIA…TLRPKWHLQP (71 aa)). Residues 355–417 (GWGLTEGGGA…MKSPSVIAGY (63 aa)) are SBD2.

This sequence belongs to the ATP-dependent AMP-binding enzyme family.

It participates in antifungal biosynthesis. Functionally, acyl-CoA ligase; part of the gene cluster that mediates the biosynthesis of the antifungal antibiotic FR901469, an inhibitor of beta-1,3-glucansynthase, exerting antifungal activity against the pathogenes Candida albicans and Aspergillus fumigatus. FR901469 is a cyclic depsipeptide containing 12 amino acid residues and a fatty acid chain. The NRPS frbI contains 12 modules responsible for the formation of the depsipeptide backbone which is denoted as Acyl-Thr-Ala-Tyr-Val-4OHPro-Thr-Thr-3OHPro-threo3OHGln-Gly-Thr-Orn-OH (C71H116N14O23). The PKS frbB is probably involved in the production of the hydrocarbon chain, and the acyl-CoA ligase frbC might be involved in the transport of the chain to the peptide ptoduct of frbI. Because FR901469 contains 3 hydroxylated amino acid residues, the 3 oxygenases frbA, frbH, and frbJ might be participating in amino acid hydroxylation. As no thioesterase domains were detected in frbI or frbB, the thioesterases frbD and frbE may instead release and cyclize the products of the NRPS and PKS, respectively. The polypeptide is Acyl-CoA ligase frbB (Dothideomycetidae sp. (strain 11243) (Fungal sp. (strain No.11243))).